Reading from the N-terminus, the 132-residue chain is uncharacterized protein (132 aa).

Residues 10 to 30 traverse the membrane as a helical segment; the sequence is LVLFFTIILIALCPFVYYLWD. A coiled-coil region spans residues 50–79; that stretch reads KNCSTEIEHAIEEHKRKNKEKKEAKEKRLA.

The protein localises to the membrane. This is an uncharacterized protein from Invertebrate iridescent virus 6 (IIV-6).